Reading from the N-terminus, the 274-residue chain is Glutamate racemase (274 aa).

Substrate contacts are provided by residues 9 to 10 (DS) and 41 to 42 (YG). Catalysis depends on C73, which acts as the Proton donor/acceptor. Residue 74-75 (NT) participates in substrate binding. C183 (proton donor/acceptor) is an active-site residue. Residue 184 to 185 (TH) coordinates substrate.

The protein belongs to the aspartate/glutamate racemases family.

It catalyses the reaction L-glutamate = D-glutamate. The protein operates within cell wall biogenesis; peptidoglycan biosynthesis. Provides the (R)-glutamate required for cell wall biosynthesis. This is Glutamate racemase from Shewanella baltica (strain OS223).